The chain runs to 144 residues: Gonadotropin subunit beta-2 (144 aa).

An N-terminal signal peptide occupies residues 1–27 (MGTPVKILVVRNHILFSVVVLLAVAQS). Intrachain disulfides connect Cys-33/Cys-81, Cys-47/Cys-96, Cys-50/Cys-134, Cys-58/Cys-112, Cys-62/Cys-114, and Cys-117/Cys-124. N-linked (GlcNAc...) asparagine glycosylation is present at Asn-37. A propeptide spanning residues 143–144 (VY) is cleaved from the precursor.

The protein belongs to the glycoprotein hormones subunit beta family. Heterodimer of an alpha and a beta chain.

Its subcellular location is the secreted. Involved in gametogenesis and steroidogenesis. The protein is Gonadotropin subunit beta-2 (cgbb) of Cyprinus carpio (Common carp).